A 285-amino-acid polypeptide reads, in one-letter code: MASYKFKTQNSFLLLLSISFFFLLLLNKVNSTGSLSFSFPKFAPNQPYLIFQRDALVTSTGVLQLTNVVNGVPSRKSLGRALYAAPFQIWDSTTGNVASFVTSFSFIIQAPNPATTADGLAFFLAPVDTQPLDLGGMLGIFKNGYFNKSNQIVAVEFDTFSNRHWDPTGRHMGINVNSIVSVKTVPWNWANGEVANVFISYEASTKSLTASLVYPSLETSFIIHAIVDVKDVLPEWVRFGFSATTGIDTGYVQTNDVLSWSFESNLPGGNSVASVKNAGLSTYAA.

An N-terminal signal peptide occupies residues 1–31 (MASYKFKTQNSFLLLLSISFFFLLLLNKVNS). An N-linked (GlcNAc...) asparagine glycan is attached at Asn147. Mn(2+) contacts are provided by Glu156 and Asp158. Residues Asp158, Asn162, and Asp166 each contribute to the Ca(2+) site. Mn(2+) is bound by residues Asp166 and His171.

It belongs to the leguminous lectin family. Homotetramer. In terms of processing, mostly found in non-glycosylated form. In terms of tissue distribution, expressed in seed.

In terms of biological role, seed lectin. The chain is Seed agglutinin 2 from Robinia pseudoacacia (Black locust).